The following is an 894-amino-acid chain: Leucine--tRNA ligase, mitochondrial (894 aa).

Residues 1–9 constitute a mitochondrion transit peptide; the sequence is MLSRPSSRF. The 'HIGH' region signature appears at 56–66; that stretch reads PYPSGALHIGH. The 'KMSKS' region signature appears at 646-650; that stretch reads KMSKS. Lysine 649 contributes to the ATP binding site.

It belongs to the class-I aminoacyl-tRNA synthetase family.

The protein resides in the mitochondrion matrix. The enzyme catalyses tRNA(Leu) + L-leucine + ATP = L-leucyl-tRNA(Leu) + AMP + diphosphate. Functionally, catalyzes the attachment of leucine to tRNA(Leu) in the mitochondrion. This is Leucine--tRNA ligase, mitochondrial (NAM2) from Saccharomyces cerevisiae (strain ATCC 204508 / S288c) (Baker's yeast).